A 242-amino-acid chain; its full sequence is Thaumatin-like protein 2 (242 aa).

An N-terminal signal peptide occupies residues 1-23 (MMKTLGAVLSLSLTLLSFGGAHA). Intrachain disulfides connect cysteine 32–cysteine 241, cysteine 77–cysteine 87, cysteine 92–cysteine 99, cysteine 147–cysteine 230, cysteine 152–cysteine 213, cysteine 160–cysteine 176, cysteine 180–cysteine 189, and cysteine 190–cysteine 200.

Belongs to the thaumatin family. Preferentially expressed in the abscission zone of fruit. Also expressed in leaf abscission zone.

It localises to the secreted. Its function is as follows. May be involved in protecting plant tissues from pathogen infection. This Prunus persica (Peach) protein is Thaumatin-like protein 2.